Consider the following 529-residue polypeptide: uncharacterized protein (529 aa).

Residues 178–186 (TSGTTGQPK), aspartate 401, arginine 416, and lysine 510 each bind ATP.

Belongs to the ATP-dependent AMP-binding enzyme family.

This is an uncharacterized protein from Bacillus subtilis (strain 168).